We begin with the raw amino-acid sequence, 111 residues long: DIVLTQSPASLAVSLGQRATISCRASKSVSTSGYSYMHWYQQKPGQPPKLLIYLASSLESGVPARFSGSGSGTDFTLNIQPVEEEDAAIYYCQHSRELPLTFGAGTKLELK.

Residues 1–23 (DIVLTQSPASLAVSLGQRATISC) are framework-1. An intrachain disulfide couples Cys-23 to Cys-92. The tract at residues 24–38 (RASKSVSTSGYSYMH) is complementarity-determining-1. The framework-2 stretch occupies residues 39 to 53 (WYQQKPGQPPKLLIY). The tract at residues 54–60 (LASSLES) is complementarity-determining-2. A framework-3 region spans residues 61–92 (GVPARFSGSGSGTDFTLNIQPVEEEDAAIYYC). Residues 93 to 101 (QHSRELPLT) form a complementarity-determining-3 region. Positions 102-111 (FGAGTKLELK) are framework-4.

The chain is Ig kappa chain V-III region PC 2485/PC 4039 from Mus musculus (Mouse).